The chain runs to 452 residues: Phosphoglucosamine mutase (452 aa).

Ser108 (phosphoserine intermediate) is an active-site residue. Mg(2+) contacts are provided by Ser108, Asp247, Asp249, and Asp251. Position 108 is a phosphoserine (Ser108).

The protein belongs to the phosphohexose mutase family. Mg(2+) serves as cofactor. In terms of processing, activated by phosphorylation.

The enzyme catalyses alpha-D-glucosamine 1-phosphate = D-glucosamine 6-phosphate. Catalyzes the conversion of glucosamine-6-phosphate to glucosamine-1-phosphate. This is Phosphoglucosamine mutase from Paraburkholderia phymatum (strain DSM 17167 / CIP 108236 / LMG 21445 / STM815) (Burkholderia phymatum).